The primary structure comprises 60 residues: Cytotoxin 8 (60 aa).

Intrachain disulfides connect C3–C21, C14–C38, C42–C53, and C54–C59.

This sequence belongs to the three-finger toxin family. Short-chain subfamily. Type IA cytotoxin sub-subfamily. As to quaternary structure, monomer in solution; Homodimer and oligomer in the presence of negatively charged lipids forming a pore with a size ranging between 20 and 30 Angstroms. As to expression, expressed by the venom gland.

It localises to the secreted. The protein resides in the target cell membrane. Functionally, shows cytolytic activity on many different cells by forming pore in lipid membranes. In vivo, increases heart rate or kills the animal by cardiac arrest. In addition, it binds to heparin with high affinity, interacts with Kv channel-interacting protein 1 (KCNIP1) in a calcium-independent manner, and binds to integrin alpha-V/beta-3 (ITGAV/ITGB3) with moderate affinity. This chain is Cytotoxin 8, found in Naja annulifera (Banded Egyptian cobra).